An 825-amino-acid chain; its full sequence is AMP deaminase 2 (825 aa).

Residues 1–49 (MASYPSGSGKPKAKYPFKKRASLQASTAAPEARGGLGAPPLQSARSLPG) are disordered. Basic residues predominate over residues 11 to 21 (PKAKYPFKKRA). Phosphoserine is present on Ser-22. Residue Arg-45 is modified to Omega-N-methylarginine. Phosphoserine occurs at positions 46, 64, and 80. Tyr-91 bears the Phosphotyrosine mark. Phosphoserine is present on residues Ser-97 and Ser-114. Position 134 is a phosphothreonine (Thr-134). Ser-136 and Ser-138 each carry phosphoserine. Zn(2+) contacts are provided by His-364 and His-366. Substrate is bound by residues His-366 and 435-440 (KFNAKY). His-633 contacts Zn(2+). Glu-636 contacts substrate. The active-site Proton acceptor is His-655. Asp-710 contacts Zn(2+). 711 to 714 (DPLQ) lines the substrate pocket.

This sequence belongs to the metallo-dependent hydrolases superfamily. Adenosine and AMP deaminases family. In terms of assembly, homotetramer. Zn(2+) is required as a cofactor. In terms of tissue distribution, highly expressed in cerebellum.

The enzyme catalyses AMP + H2O + H(+) = IMP + NH4(+). The protein operates within purine metabolism; IMP biosynthesis via salvage pathway; IMP from AMP: step 1/1. AMP deaminase plays a critical role in energy metabolism. Catalyzes the deamination of AMP to IMP and plays an important role in the purine nucleotide cycle. This is AMP deaminase 2 from Homo sapiens (Human).